The primary structure comprises 511 residues: Caspase-8 (511 aa).

Residues 1–242 (MSGHNILTQL…MDGNGIANES (242 aa)) constitute a propeptide that is removed on maturation. Catalysis depends on residues His352 and Cys393. Residues 406–415 (KINASTKSPC) constitute a propeptide that is removed on maturation.

Belongs to the peptidase C14A family. Heterotetramer that consists of two anti-parallel arranged heterodimers, each one formed by a 15 kDa (caspase-8 subunit p15) and a 10 kDa (caspase-8 subunit p10) subunit. Interacts with the N-terminus of Fadd.

The protein resides in the cytoplasm. It catalyses the reaction Strict requirement for Asp at position P1 and has a preferred cleavage sequence of (Leu/Asp/Val)-Glu-Thr-Asp-|-(Gly/Ser/Ala).. Effector of the programmed cell death (PCD) activators rpr, grim and W. May play an apoptotic role in the germline as well as soma. Role in immune response, required to resist Gram-negative bacterial infections by regulating DptA. Fadd interacts with Dredd, Fadd promotes cleavage of Dredd and is necessary and sufficient for enhancing Dredd-induced apoptosis. The chain is Caspase-8 from Drosophila pseudoobscura pseudoobscura (Fruit fly).